The chain runs to 342 residues: N-acetyl-gamma-glutamyl-phosphate reductase (342 aa).

The active site involves Cys-147.

The protein belongs to the NAGSA dehydrogenase family. Type 1 subfamily.

The protein localises to the cytoplasm. It carries out the reaction N-acetyl-L-glutamate 5-semialdehyde + phosphate + NADP(+) = N-acetyl-L-glutamyl 5-phosphate + NADPH + H(+). It participates in amino-acid biosynthesis; L-arginine biosynthesis; N(2)-acetyl-L-ornithine from L-glutamate: step 3/4. Catalyzes the NADPH-dependent reduction of N-acetyl-5-glutamyl phosphate to yield N-acetyl-L-glutamate 5-semialdehyde. In Campylobacter jejuni subsp. jejuni serotype O:2 (strain ATCC 700819 / NCTC 11168), this protein is N-acetyl-gamma-glutamyl-phosphate reductase.